Reading from the N-terminus, the 207-residue chain is Large ribosomal subunit protein uL3 (207 aa).

The tract at residues 119–143 (GFQGSIKRNGQHRGPMAHGSRYHRR) is disordered.

The protein belongs to the universal ribosomal protein uL3 family. Part of the 50S ribosomal subunit. Forms a cluster with proteins L14 and L19.

Its function is as follows. One of the primary rRNA binding proteins, it binds directly near the 3'-end of the 23S rRNA, where it nucleates assembly of the 50S subunit. This is Large ribosomal subunit protein uL3 from Ligilactobacillus salivarius (strain UCC118) (Lactobacillus salivarius).